Consider the following 183-residue polypeptide: Ribosome rescue factor SmrB (183 aa).

Positions 98-173 constitute a Smr domain; sequence LDLHGLTQLQ…GDAALLVLIE (76 aa).

It belongs to the SmrB family. In terms of assembly, associates with collided ribosomes, but not with correctly translating polysomes.

Acts as a ribosome collision sensor. Detects stalled/collided disomes (pairs of ribosomes where the leading ribosome is stalled and a second ribosome has collided with it) and endonucleolytically cleaves mRNA at the 5' boundary of the stalled ribosome. Stalled/collided disomes form a new interface (primarily via the 30S subunits) that binds SmrB. Cleaved mRNA becomes available for tmRNA ligation, leading to ribosomal subunit dissociation and rescue of stalled ribosomes. The sequence is that of Ribosome rescue factor SmrB from Shigella boydii serotype 18 (strain CDC 3083-94 / BS512).